The chain runs to 276 residues: Diaminopimelate epimerase (276 aa).

Substrate is bound by residues Asn-13, Gln-46, and Asn-66. Cys-75 functions as the Proton donor in the catalytic mechanism. Residues 76-77, Asn-159, Asn-192, and 210-211 contribute to the substrate site; these read GN and ER. Cys-219 acts as the Proton acceptor in catalysis. 220–221 serves as a coordination point for substrate; the sequence is GT.

This sequence belongs to the diaminopimelate epimerase family. Homodimer.

It localises to the cytoplasm. It carries out the reaction (2S,6S)-2,6-diaminopimelate = meso-2,6-diaminopimelate. The protein operates within amino-acid biosynthesis; L-lysine biosynthesis via DAP pathway; DL-2,6-diaminopimelate from LL-2,6-diaminopimelate: step 1/1. Its function is as follows. Catalyzes the stereoinversion of LL-2,6-diaminopimelate (L,L-DAP) to meso-diaminopimelate (meso-DAP), a precursor of L-lysine and an essential component of the bacterial peptidoglycan. This Hahella chejuensis (strain KCTC 2396) protein is Diaminopimelate epimerase.